Reading from the N-terminus, the 505-residue chain is Elsinochrome transporter 1 (505 aa).

Residues 1–10 (MALSGLGSGP) show a composition bias toward gly residues. A disordered region spans residues 1-25 (MALSGLGSGPEGNPNNHQGKAIPTL). Residues 35-55 (FLFSWVSFLVPFWSWYPFSPL) form a helical membrane-spanning segment. N64 and N80 each carry an N-linked (GlcNAc...) asparagine glycan. A disordered region spans residues 221–295 (DTPTGAGKPP…TEKGESLPLT (75 aa)). Residues 255–267 (TPSSPDRSSSTNS) are compositionally biased toward low complexity. 6 helical membrane-spanning segments follow: residues 313–333 (VIFSGPTLVLGACYFCTFGAE), 348–368 (LGLGLQNAGNLAAIFGLLNIV), 391–411 (KALLHTYCVMTGVFCIAIGLA), 417–437 (ATLVGLVSGGLAFFLEGANGL), 449–469 (VVSGFTGACGNLGGIVFAIVF), and 479–499 (VFWIIGAIIIGLQVATCWIKP).

This sequence belongs to the major facilitator superfamily. Nitrate/nitrite porter (TC 2.A.1.8) family.

It is found in the cell membrane. Its function is as follows. Major facilitator-type transporter; part of the gene cluster that mediates the biosynthesis of elsinochromes, pigments consisting of at least four interconvertible tautomers (A, B, C and D) that have a core phenolic quinone to which various side chains are attached and which play an important role in fungal pathogenesis. Once elsinochrome is synthesized, it must be exported outside the fungal cells, which is probably accomplished by the ECT1 transporter, to avoid toxicity. In Elsinoe fawcettii (Citrus scab fungus), this protein is Elsinochrome transporter 1.